Here is a 334-residue protein sequence, read N- to C-terminus: MSLDIDQIALHQLIKRDEQTLDVVLRDSLLPTNAVVEEMMAELHRVYSAKSKAYGLFNEQSELADALKRSRKGDEDFLSFSRAATGRLRDELAKYPFAEGGVVLFCQYRYLAVEYLLISVLSSCHSMRVNEQLDLSTTHYLDINRADIVARIDLTEWETNPESTRYLTFLKGRVGRKVSDFFMDFLSAAEGLDTKAQNRGLLQAVDDYCADAELGKNERQAYRQQVYSYCNEQLQAGEEIALQALAQELPKLGEKNFQQFSAEQGYALEESFPADRGTLRQLTKFAGSGGGLSINFDALLLDERIFWDAATDTLTIKGTPPNLRDQLQRRAGSK.

It belongs to the YejK family.

The protein localises to the cytoplasm. The protein resides in the nucleoid. The protein is Nucleoid-associated protein YPK_2796 of Yersinia pseudotuberculosis serotype O:3 (strain YPIII).